Reading from the N-terminus, the 395-residue chain is Tryptophan synthase beta chain (395 aa).

An N6-(pyridoxal phosphate)lysine modification is found at K86.

Belongs to the TrpB family. As to quaternary structure, tetramer of two alpha and two beta chains. The cofactor is pyridoxal 5'-phosphate.

The catalysed reaction is (1S,2R)-1-C-(indol-3-yl)glycerol 3-phosphate + L-serine = D-glyceraldehyde 3-phosphate + L-tryptophan + H2O. The protein operates within amino-acid biosynthesis; L-tryptophan biosynthesis; L-tryptophan from chorismate: step 5/5. Its function is as follows. The beta subunit is responsible for the synthesis of L-tryptophan from indole and L-serine. The sequence is that of Tryptophan synthase beta chain from Pseudoalteromonas atlantica (strain T6c / ATCC BAA-1087).